The chain runs to 173 residues: UPF0398 protein SMU_470 (173 aa).

This sequence belongs to the UPF0398 family.

The polypeptide is UPF0398 protein SMU_470 (Streptococcus mutans serotype c (strain ATCC 700610 / UA159)).